The primary structure comprises 460 residues: NADH-ubiquinone oxidoreductase chain 4 (460 aa).

13 helical membrane passes run 22–42, 59–79, 93–113, 114–134, 148–168, 195–215, 225–245, 258–278, 286–306, 310–330, 351–371, 394–414, and 440–460; these read WLWPITTTHSLLIALLSLLWF, IDPLSAPLLILTCWLLPLMIL, QRIYITLLISLQTFLIMAFSA, TELIMFYIMFEATLIPTLIII, TYFLFYTLIGSLPLLVALLLM, FWWTACLIAFLVKMPLYGVHL, PIAGSMILAAVLLKLGGYGMM, MAYPFLILAIWGVIMTSSICL, LIAYSSVSHMGLVAGAIMIQT, FAGAITLMIAHGLVSSALFCL, VMLPLMATWWFIANLANLALP, ILLTGLGVLITASYSLYMFLM, and LHLIPMLLLILKPELIWGWTF.

This sequence belongs to the complex I subunit 4 family.

It localises to the mitochondrion membrane. It catalyses the reaction a ubiquinone + NADH + 5 H(+)(in) = a ubiquinol + NAD(+) + 4 H(+)(out). Functionally, core subunit of the mitochondrial membrane respiratory chain NADH dehydrogenase (Complex I) that is believed to belong to the minimal assembly required for catalysis. Complex I functions in the transfer of electrons from NADH to the respiratory chain. The immediate electron acceptor for the enzyme is believed to be ubiquinone. This chain is NADH-ubiquinone oxidoreductase chain 4 (MT-ND4), found in Squalus acanthias (Spiny dogfish).